A 734-amino-acid chain; its full sequence is Alpha-catulin (734 aa).

A phosphoserine mark is found at Ser374 and Ser538.

The protein belongs to the vinculin/alpha-catenin family. Interacts with ARHGEF1. Interacts with DTNA. The interaction is required for correct localization of both CTNL1 and DTNA. Widely expressed. Expressed at lower level in neural tissues and at the highest level in the adrenal gland.

The protein resides in the cytoplasm. The protein localises to the cytoskeleton. It is found in the cell membrane. Functionally, may modulate the Rho pathway signaling by providing a scaffold for the Lbc Rho guanine nucleotide exchange factor (ARHGEF1). This is Alpha-catulin (CTNNAL1) from Homo sapiens (Human).